Consider the following 299-residue polypeptide: Trans-aconitate 3-methyltransferase (299 aa).

At Ser-2 the chain carries N-acetylserine.

It belongs to the methyltransferase superfamily. Tam family.

It localises to the cytoplasm. It carries out the reaction trans-aconitate + S-adenosyl-L-methionine = (E)-2-(methoxycarbonylmethyl)but-2-enedioate + S-adenosyl-L-homocysteine. Functionally, catalyzes the S-adenosylmethionine monomethyl esterification of trans-aconitate and 3-isopropylmalate at high affinity and of other molecules like cis-aconitate, isocitrate, and citrate at lower velocities and affinities. The function of trans-aconitate methylation appears to be in reducing the toxicity of this spontaneous breakdown product of cis-aconitate. The role of 3-isopropylmalate methylation is unclear but may represent a metabolic branch at 3-isopropylmalate, where some of the material is taken in the pathway leading to leucine and some is taken in a pathway to the 3-isopropylmalate methyl ester, a molecule that provides a signal to switch from vegetative to invasive growth in response to amino acid starvation. This chain is Trans-aconitate 3-methyltransferase (TMT1), found in Saccharomyces cerevisiae (strain YJM789) (Baker's yeast).